Consider the following 618-residue polypeptide: DNA mismatch repair protein MutL (618 aa).

Residues 367 to 381 (EPTAAREPATPRYSG) show a composition bias toward low complexity. Residues 367 to 402 (EPTAAREPATPRYSGGASGGNGGRQSAGGWPHAQPG) are disordered. Residues 382–392 (GASGGNGGRQS) show a composition bias toward gly residues.

It belongs to the DNA mismatch repair MutL/HexB family.

Functionally, this protein is involved in the repair of mismatches in DNA. It is required for dam-dependent methyl-directed DNA mismatch repair. May act as a 'molecular matchmaker', a protein that promotes the formation of a stable complex between two or more DNA-binding proteins in an ATP-dependent manner without itself being part of a final effector complex. This is DNA mismatch repair protein MutL from Salmonella dublin (strain CT_02021853).